The chain runs to 107 residues: MMKVLVVVALLVTLISYSSSEGIDDLEADELSSLMANEQTRKECIPKHHECTSNKHGCCRGNFFKYKCQCTTVVTQDGEQTERCFCGTPPHHKAAELVVGFGKKIFG.

The first 20 residues, 1–20, serve as a signal peptide directing secretion; the sequence is MMKVLVVVALLVTLISYSSS. A propeptide spanning residues 21 to 41 is cleaved from the precursor; the sequence is EGIDDLEADELSSLMANEQTR. 4 disulfide bridges follow: C44–C59, C51–C68, C58–C86, and C70–C84.

The protein belongs to the neurotoxin 19 (CSTX) family. 04 (U1-Lctx) subfamily. In terms of tissue distribution, expressed by the venom gland.

It is found in the secreted. The chain is U1-lycotoxin-Ls1b from Lycosa singoriensis (Wolf spider).